The primary structure comprises 329 residues: 3'-5' exonuclease (329 aa).

Residues 26–88 (EEKPKPKKVV…MADVGTPSPE (63 aa)) are disordered. A compositionally biased stretch (basic and acidic residues) spans 46–65 (KNLDTPEIVNKENAEVENPP). Residues Ser-78 and Ser-86 each carry the phosphoserine modification. One can recognise a 3'-5' exonuclease domain in the interval 130 to 288 (TEIVPMAFDM…IGQVIYREIE (159 aa)). 3 residues coordinate Mg(2+): Asp-138, Glu-140, and Asp-276.

The protein belongs to the WRNexo family.

It localises to the nucleus. Functionally, has exonuclease activity on both single-stranded and duplex templates bearing overhangs, but not blunt ended duplex DNA, and cleaves in a 3'-5' direction. Essential for the formation of DNA replication focal centers. Has an important role in maintaining genome stability. This chain is 3'-5' exonuclease, found in Drosophila mojavensis (Fruit fly).